Consider the following 333-residue polypeptide: Protoheme IX farnesyltransferase (333 aa).

A run of 8 helical transmembrane segments spans residues 63-83 (LACT…LNCI), 109-129 (AAFI…VSGV), 132-152 (LAAG…TAIL), 160-180 (IVIG…AASG), 188-208 (WLFS…ALLL), 214-234 (AVGI…RAIS), 245-265 (GFGV…LIPF), and 292-312 (WSIF…LPMA).

The protein belongs to the UbiA prenyltransferase family. Protoheme IX farnesyltransferase subfamily.

It is found in the cell inner membrane. The catalysed reaction is heme b + (2E,6E)-farnesyl diphosphate + H2O = Fe(II)-heme o + diphosphate. Its pathway is porphyrin-containing compound metabolism; heme O biosynthesis; heme O from protoheme: step 1/1. Converts heme B (protoheme IX) to heme O by substitution of the vinyl group on carbon 2 of heme B porphyrin ring with a hydroxyethyl farnesyl side group. This Prochlorococcus marinus (strain MIT 9313) protein is Protoheme IX farnesyltransferase.